A 59-amino-acid chain; its full sequence is Sec-independent protein translocase protein TatA 1 (59 aa).

Residues phenylalanine 3 to serine 23 traverse the membrane as a helical segment.

This sequence belongs to the TatA/E family. Forms a complex with TatC.

The protein localises to the cell inner membrane. Part of the twin-arginine translocation (Tat) system that transports large folded proteins containing a characteristic twin-arginine motif in their signal peptide across membranes. TatA could form the protein-conducting channel of the Tat system. This chain is Sec-independent protein translocase protein TatA 1, found in Aquifex aeolicus (strain VF5).